The sequence spans 126 residues: Holo-[acyl-carrier-protein] synthase (126 aa).

Mg(2+) is bound by residues D9 and E58.

This sequence belongs to the P-Pant transferase superfamily. AcpS family. Mg(2+) is required as a cofactor.

It is found in the cytoplasm. It catalyses the reaction apo-[ACP] + CoA = holo-[ACP] + adenosine 3',5'-bisphosphate + H(+). In terms of biological role, transfers the 4'-phosphopantetheine moiety from coenzyme A to a Ser of acyl-carrier-protein. The sequence is that of Holo-[acyl-carrier-protein] synthase from Salmonella agona (strain SL483).